We begin with the raw amino-acid sequence, 292 residues long: UDP-N-acetylenolpyruvoylglucosamine reductase (292 aa).

The region spanning 27–188 (KIGGPVRLFI…LRVGFRIIKG (162 aa)) is the FAD-binding PCMH-type domain. The active site involves arginine 166. Residue serine 217 is the Proton donor of the active site. Residue glutamate 288 is part of the active site.

It belongs to the MurB family. Requires FAD as cofactor.

It localises to the cytoplasm. It catalyses the reaction UDP-N-acetyl-alpha-D-muramate + NADP(+) = UDP-N-acetyl-3-O-(1-carboxyvinyl)-alpha-D-glucosamine + NADPH + H(+). Its pathway is cell wall biogenesis; peptidoglycan biosynthesis. In terms of biological role, cell wall formation. This is UDP-N-acetylenolpyruvoylglucosamine reductase from Thermosipho melanesiensis (strain DSM 12029 / CIP 104789 / BI429).